A 107-amino-acid chain; its full sequence is Large ribosomal subunit protein P2-A (107 aa).

The interval G85–D107 is disordered.

The protein belongs to the eukaryotic ribosomal protein P1/P2 family. P1 and P2 exist as dimers at the large ribosomal subunit. Phosphorylated.

Plays an important role in the elongation step of protein synthesis. The chain is Large ribosomal subunit protein P2-A from Trypanosoma cruzi.